A 96-amino-acid polypeptide reads, in one-letter code: EFQEEIKEGVEEHKHEDDPEMTRLMVTEKQESKNFSKMAKSQSFSTRIEELGGSISFLTETGVTMIELPKTASEHDMDQLLHDILAAVESLGSTPR.

A disordered region spans residues 1–20; that stretch reads EFQEEIKEGVEEHKHEDDPE. N34 carries N-linked (GlcNAc...) asparagine glycosylation.

The polypeptide is Antigen H4 (H4) (Toxoplasma gondii).